We begin with the raw amino-acid sequence, 197 residues long: Recombination protein RecR (197 aa).

The C4-type zinc finger occupies 57–72; the sequence is CSICFAITEDDPCAIC. The region spanning 79-174 is the Toprim domain; it reads GTICVVENSQ…RISRLAHGIP (96 aa).

It belongs to the RecR family.

Functionally, may play a role in DNA repair. It seems to be involved in an RecBC-independent recombinational process of DNA repair. It may act with RecF and RecO. The protein is Recombination protein RecR of Pelobacter propionicus (strain DSM 2379 / NBRC 103807 / OttBd1).